A 604-amino-acid chain; its full sequence is ATP-dependent RNA helicase DED1 (604 aa).

The span at 1–19 (MAELSEQVQNLSINDNNEN) shows a compositional bias: polar residues. Residues 1–55 (MAELSEQVQNLSINDNNENGYVPPHLRGKPRSARNNSSNYNNNNGGYNGGRGGGS) form a disordered region. The residue at position 2 (Ala-2) is an N-acetylalanine. The segment covering 34 to 45 (RNNSSNYNNNNG) has biased composition (low complexity). The span at 46 to 55 (GYNGGRGGGS) shows a compositional bias: gly residues. Arg-51 carries the post-translational modification Omega-N-methylarginine. Arg-62 is subject to Dimethylated arginine; alternate. Position 62 is an omega-N-methylarginine; alternate (Arg-62). Residues 67–76 (NGGFFGGNNG) are compositionally biased toward gly residues. Positions 67–94 (NGGFFGGNNGGSRSNGRSGGRWIDGKHV) are disordered. The Q motif motif lies at 142 to 170 (TEFTSPPLDGLLLENIKLARFTKPTPVQK). A Glycyl lysine isopeptide (Lys-Gly) (interchain with G-Cter in ubiquitin) cross-link involves residue Lys-158. The region spanning 173–362 (VPIVANGRDL…RDFLSDYIFL (190 aa)) is the Helicase ATP-binding domain. 186-193 (AQTGSGKT) is an ATP binding site. 3 positions are modified to phosphoserine: Ser-215, Ser-218, and Ser-263. A DEAD box motif is present at residues 306-309 (DEAD). Residues 373–533 (NITQKVLYVE…EVPSFLKDAM (161 aa)) form the Helicase C-terminal domain. The disordered stretch occupies residues 533–604 (MMSAPGSRSN…SGGSNNSSWW (72 aa)). Phosphoserine occurs at positions 535, 539, and 543. Position 545 is a dimethylated arginine; alternate (Arg-545). Residue Arg-545 is modified to Omega-N-methylarginine; alternate. Phosphoserine occurs at positions 572 and 576. Omega-N-methylarginine is present on Arg-578. The span at 584–604 (GSDSKSSGWGNSGGSNNSSWW) shows a compositional bias: low complexity. A Phosphoserine modification is found at Ser-598.

Belongs to the DEAD box helicase family. DDX3/DED1 subfamily. As to quaternary structure, interacts with the L-A virus GAG protein and the whole L-A virus particles.

The protein localises to the cytoplasm. It carries out the reaction ATP + H2O = ADP + phosphate + H(+). Its function is as follows. ATP-binding RNA helicase involved in translation initiation. Remodels RNA in response to ADP and ATP concentrations by facilitating disruption, but also formation of RNA duplexes. Has weak ATP-dependent affinity for dsRNA, but strong ATP-dependent affinity for ssRNA. Acts as a virus host factor involved in the replication of the MBV and the L-A viruses by promoting the negative-strand RNA synthesis. May be involved in recognition of the preinitiation complex and DNA binding of the RNA polymerase III and play a role in mRNA splicing. In Saccharomyces cerevisiae (strain ATCC 204508 / S288c) (Baker's yeast), this protein is ATP-dependent RNA helicase DED1.